The primary structure comprises 118 residues: M-zodatoxin-Lt8p (118 aa).

Positions 1 to 3 are cleaved as a signal peptide; the sequence is AES. Residues 4 to 43 constitute a propeptide that is removed on maturation; it reads KPAESEHELAEVEEENELADLEDAVWLEHLADLSDLEEAR.

It belongs to the cationic peptide 06 (cytoinsectotoxin) family. In terms of tissue distribution, expressed by the venom gland.

Its subcellular location is the secreted. Its function is as follows. Insecticidal, cytolytic and antimicrobial peptide. Forms voltage-dependent, ion-permeable channels in membranes. At high concentration causes cell membrane lysis. This is M-zodatoxin-Lt8p (cit 1-15) from Lachesana tarabaevi (Spider).